The primary structure comprises 245 residues: Small ribosomal subunit protein uS2 (245 aa).

This sequence belongs to the universal ribosomal protein uS2 family.

The protein is Small ribosomal subunit protein uS2 of Dehalococcoides mccartyi (strain ATCC BAA-2266 / KCTC 15142 / 195) (Dehalococcoides ethenogenes (strain 195)).